We begin with the raw amino-acid sequence, 527 residues long: Formate--tetrahydrofolate ligase (527 aa).

53-60 (TSSGEGKT) provides a ligand contact to ATP.

It belongs to the formate--tetrahydrofolate ligase family.

It carries out the reaction (6S)-5,6,7,8-tetrahydrofolate + formate + ATP = (6R)-10-formyltetrahydrofolate + ADP + phosphate. Its pathway is one-carbon metabolism; tetrahydrofolate interconversion. The protein is Formate--tetrahydrofolate ligase of Acholeplasma laidlawii (strain PG-8A).